Here is a 229-residue protein sequence, read N- to C-terminus: Ribonuclease 3 (229 aa).

The RNase III domain maps to 7–132 (LKAFEGRIGH…VIAAVYLDAG (126 aa)). Residue E45 coordinates Mg(2+). The active site involves D49. Positions 118 and 121 each coordinate Mg(2+). The active site involves E121. The 70-residue stretch at 157–226 (DAKTALQEWA…ARALLARMEA (70 aa)) folds into the DRBM domain.

Belongs to the ribonuclease III family. As to quaternary structure, homodimer. Requires Mg(2+) as cofactor.

The protein localises to the cytoplasm. It catalyses the reaction Endonucleolytic cleavage to 5'-phosphomonoester.. Functionally, digests double-stranded RNA. Involved in the processing of primary rRNA transcript to yield the immediate precursors to the large and small rRNAs (23S and 16S). Processes some mRNAs, and tRNAs when they are encoded in the rRNA operon. Processes pre-crRNA and tracrRNA of type II CRISPR loci if present in the organism. This is Ribonuclease 3 from Cereibacter sphaeroides (strain ATCC 17029 / ATH 2.4.9) (Rhodobacter sphaeroides).